Consider the following 28-residue polypeptide: fur leader peptide (28 aa).

Its function is as follows. Cotranscribed with fur, it is essential for fur translation. The fur ribosomal binding site (RBS) is occluded by the 5'-mRNA secondary structure, which is opened by uof translation. This Escherichia coli (strain K12) protein is fur leader peptide (uof).